We begin with the raw amino-acid sequence, 1342 residues long: DNA-directed RNA polymerase subunit beta (1342 aa).

Belongs to the RNA polymerase beta chain family. The RNAP catalytic core consists of 2 alpha, 1 beta, 1 beta' and 1 omega subunit. When a sigma factor is associated with the core the holoenzyme is formed, which can initiate transcription.

It carries out the reaction RNA(n) + a ribonucleoside 5'-triphosphate = RNA(n+1) + diphosphate. Its function is as follows. DNA-dependent RNA polymerase catalyzes the transcription of DNA into RNA using the four ribonucleoside triphosphates as substrates. The protein is DNA-directed RNA polymerase subunit beta of Buchnera aphidicola subsp. Acyrthosiphon pisum (strain Tuc7).